The following is a 307-amino-acid chain: Nitrogenase iron protein 2 (307 aa).

An ATP-binding site is contributed by 13-20 (GKGGIGKS). Cys-101 is a [4Fe-4S] cluster binding site. Arg-104 is subject to ADP-ribosylarginine; by dinitrogenase reductase ADP-ribosyltransferase. Cys-135 contacts [4Fe-4S] cluster. A disordered region spans residues 285–307 (QLTETDKAAKESEKKQEDAEGEA).

Belongs to the NifH/BchL/ChlL family. Homodimer. Requires [4Fe-4S] cluster as cofactor. In terms of processing, the reversible ADP-ribosylation of Arg-104 inactivates the nitrogenase reductase and regulates nitrogenase activity.

It catalyses the reaction N2 + 8 reduced [2Fe-2S]-[ferredoxin] + 16 ATP + 16 H2O = H2 + 8 oxidized [2Fe-2S]-[ferredoxin] + 2 NH4(+) + 16 ADP + 16 phosphate + 6 H(+). Its function is as follows. The key enzymatic reactions in nitrogen fixation are catalyzed by the nitrogenase complex, which has 2 components: the iron protein and the molybdenum-iron protein. The protein is Nitrogenase iron protein 2 (nifH2) of Mastigocladus laminosus (Fischerella sp.).